Reading from the N-terminus, the 272-residue chain is Orotidine 5'-phosphate decarboxylase (272 aa).

Catalysis depends on Lys93, which acts as the Proton donor.

This sequence belongs to the OMP decarboxylase family. Type 2 subfamily.

The catalysed reaction is orotidine 5'-phosphate + H(+) = UMP + CO2. It participates in pyrimidine metabolism; UMP biosynthesis via de novo pathway; UMP from orotate: step 2/2. This Roseiflexus sp. (strain RS-1) protein is Orotidine 5'-phosphate decarboxylase.